The sequence spans 148 residues: SsrA-binding protein (148 aa).

The disordered stretch occupies residues 128 to 148 (ESIAKKDQERNLKREFKNNNR).

This sequence belongs to the SmpB family.

It is found in the cytoplasm. Its function is as follows. Required for rescue of stalled ribosomes mediated by trans-translation. Binds to transfer-messenger RNA (tmRNA), required for stable association of tmRNA with ribosomes. tmRNA and SmpB together mimic tRNA shape, replacing the anticodon stem-loop with SmpB. tmRNA is encoded by the ssrA gene; the 2 termini fold to resemble tRNA(Ala) and it encodes a 'tag peptide', a short internal open reading frame. During trans-translation Ala-aminoacylated tmRNA acts like a tRNA, entering the A-site of stalled ribosomes, displacing the stalled mRNA. The ribosome then switches to translate the ORF on the tmRNA; the nascent peptide is terminated with the 'tag peptide' encoded by the tmRNA and targeted for degradation. The ribosome is freed to recommence translation, which seems to be the essential function of trans-translation. This chain is SsrA-binding protein, found in Fusobacterium nucleatum subsp. nucleatum (strain ATCC 25586 / DSM 15643 / BCRC 10681 / CIP 101130 / JCM 8532 / KCTC 2640 / LMG 13131 / VPI 4355).